The chain runs to 332 residues: Ribosomal RNA small subunit methyltransferase H (332 aa).

Residues G36–Y38, D54, F81, D102, and Q109 each bind S-adenosyl-L-methionine. The segment at P295–P322 is disordered.

The protein belongs to the methyltransferase superfamily. RsmH family.

It localises to the cytoplasm. The catalysed reaction is cytidine(1402) in 16S rRNA + S-adenosyl-L-methionine = N(4)-methylcytidine(1402) in 16S rRNA + S-adenosyl-L-homocysteine + H(+). In terms of biological role, specifically methylates the N4 position of cytidine in position 1402 (C1402) of 16S rRNA. The polypeptide is Ribosomal RNA small subunit methyltransferase H (Rhodopseudomonas palustris (strain ATCC BAA-98 / CGA009)).